The sequence spans 107 residues: Protein Rev (107 aa).

Phosphoserine; by host CK2 occurs at positions 5 and 8. A homomultimerization region spans residues 18–26 (IIKILYQSN). Disordered regions lie at residues 26-50 (NPYPKPEGTRQARRNRRRRWRARQR) and 82-107 (NINCSESGGTSGTQQPQGNTERVGNP). The short motif at 34-50 (TRQARRNRRRRWRARQR) is the Nuclear localization signal and RNA-binding (RRE) element. Residues 36–50 (QARRNRRRRWRARQR) are compositionally biased toward basic residues. A Nuclear export signal and binding to XPO1 motif is present at residues 73 to 84 (FQLPPIERLNIN). Low complexity predominate over residues 86–101 (SESGGTSGTQQPQGNT). Phosphoserine; by host is present on Ser92.

The protein belongs to the HIV-1 REV protein family. As to quaternary structure, homomultimer; when bound to the RRE. Multimeric assembly is essential for activity and may involve XPO1. Binds to human KPNB1, XPO1, TNPO1, RANBP5 and IPO7. Interacts with the viral Integrase. Interacts with human KHDRBS1. Interacts with human NAP1; this interaction decreases Rev multimerization and stimulates its activity. Interacts with human DEAD-box helicases DDX3 and DDX24; these interactions may serve for viral RNA export to the cytoplasm and packaging, respectively. Interacts with human PSIP1; this interaction may inhibit HIV-1 DNA integration by promoting dissociation of the Integrase-LEDGF/p75 complex. Post-translationally, asymmetrically arginine dimethylated at one site by host PRMT6. Methylation impairs the RNA-binding activity and export of viral RNA from the nucleus to the cytoplasm. In terms of processing, phosphorylated by protein kinase CK2. Presence of, and maybe binding to the N-terminus of the regulatory beta subunit of CK2 is necessary for CK2-mediated Rev's phosphorylation.

It is found in the host nucleus. The protein resides in the host nucleolus. It localises to the host cytoplasm. In terms of biological role, escorts unspliced or incompletely spliced viral pre-mRNAs (late transcripts) out of the nucleus of infected cells. These pre-mRNAs carry a recognition sequence called Rev responsive element (RRE) located in the env gene, that is not present in fully spliced viral mRNAs (early transcripts). This function is essential since most viral proteins are translated from unspliced or partially spliced pre-mRNAs which cannot exit the nucleus by the pathway used by fully processed cellular mRNAs. Rev itself is translated from a fully spliced mRNA that readily exits the nucleus. Rev's nuclear localization signal (NLS) binds directly to KPNB1/Importin beta-1 without previous binding to KPNA1/Importin alpha-1. KPNB1 binds to the GDP bound form of RAN (Ran-GDP) and targets Rev to the nucleus. In the nucleus, the conversion from Ran-GDP to Ran-GTP dissociates Rev from KPNB1 and allows Rev's binding to the RRE in viral pre-mRNAs. Rev multimerization on the RRE via cooperative assembly exposes its nuclear export signal (NES) to the surface. Rev can then form a complex with XPO1/CRM1 and Ran-GTP, leading to nuclear export of the complex. Conversion from Ran-GTP to Ran-GDP mediates dissociation of the Rev/RRE/XPO1/RAN complex, so that Rev can return to the nucleus for a subsequent round of export. Beside KPNB1, also seems to interact with TNPO1/Transportin-1, RANBP5/IPO5 and IPO7/RANBP7 for nuclear import. The nucleoporin-like HRB/RIP is an essential cofactor that probably indirectly interacts with Rev to release HIV RNAs from the perinuclear region to the cytoplasm. The chain is Protein Rev from Human immunodeficiency virus type 1 group M subtype C (isolate 92BR025) (HIV-1).